Here is a 391-residue protein sequence, read N- to C-terminus: MAKNITDVSRDDLSKVSDEELQKCSKEELLRRLRKVDAEKMNLMLEHGNMMKDVNRRLQLHLHEIRSLKEVNQKLQEDNQELRELCCFLDDDRQKGKKLSREWQRFGRYTASVMWKEVGVFQQKLKELESNQDSVMRENLELKEIIIMLDDERNGAGSRSSIDSQSSLSNLNGGSATVRDVGDGSSTSSTGSAGSPDHHHSHIHKPTEGKITSIRRSMDDLSTNHLLRNIPNGLNDSSSNYIRQLETKVRILEDDNKQLLSQQGSVGDLKTLRKGLSLYHSESQLSSLSQFQDTLQNGSIRIAGGDLAPTVTGYLPAAQKPEAVVHAMKVLEVHENLDRKIPEDYEEDLSEKEKAIVREMCNVVWRKLGDAAGTKPSIRQHLSGNQFKGPL.

2 coiled-coil regions span residues 23 to 87 (KCSK…ELCC) and 121 to 146 (FQQKLKELESNQDSVMRENLELKEII). The disordered stretch occupies residues 154-212 (NGAGSRSSIDSQSSLSNLNGGSATVRDVGDGSSTSSTGSAGSPDHHHSHIHKPTEGKIT). 2 stretches are compositionally biased toward low complexity: residues 158 to 175 (SRSSIDSQSSLSNLNGGS) and 183 to 195 (DGSSTSSTGSAGS).

The protein belongs to the CCDC85 family.

The protein localises to the cell junction. It is found in the tight junction. It localises to the adherens junction. Functionally, may play a role in cell-cell adhesion and epithelium development through its interaction with proteins of the beta-catenin family. May play an important role in cortical development, especially in the maintenance of radial glia. The polypeptide is Coiled-coil domain-containing protein 85C-A (ccdc85ca) (Danio rerio (Zebrafish)).